A 988-amino-acid chain; its full sequence is DNA-binding protein SMUBP-2 (988 aa).

Position 2 is an N-acetylalanine (A2). ATP-binding positions include 213 to 220, Q402, Y441, and E570; that span reads GPPGTGKT. Residues 637–783 form an SS DNA-binding region; sequence TAFEYLDDIV…KARHITVSRR (147 aa). 3 disordered regions span residues 651–722, 765–820, and 835–872; these read THEG…GGTD, LKHD…PHGS, and RQQGCQAQSQLGGGSRPQKAPQKKKKKEPKGPAMALPS. Positions 702-718 are enriched in polar residues; sequence SQVQPQHSSKANGSDRT. The 64-residue stretch at 721–784 folds into the R3H domain; it reads TDRTEHFRAM…ARHITVSRRS (64 aa). Basic and acidic residues predominate over residues 765-775; the sequence is LKHDSTGEGKA. Phosphoserine is present on residues S797 and S800. A compositionally biased stretch (low complexity) spans 802–817; it reads AQAEPEPQVEQPVGQP. The span at 835 to 844 shows a compositional bias: polar residues; the sequence is RQQGCQAQSQ. Positions 857–861 match the Nuclear localization signal motif; the sequence is KKKKK. The AN1-type zinc-finger motif lies at 884-933; sequence VKADNTCSFTKCSASTTTLGQFCMHCSRRYCLSHHLPEIHGCGEKARAHA. The Zn(2+) site is built by C890, C895, C906, C909, C914, H917, H923, and C925. A disordered region spans residues 943 to 988; it reads LYAGSGTKDRALDPAKRAQLQRKLDKKLGELSSQRTSKKKEKERGT. Over residues 949-971 the composition is skewed to basic and acidic residues; it reads TKDRALDPAKRAQLQRKLDKKLG. The stretch at 957–986 forms a coiled coil; sequence AKRAQLQRKLDKKLGELSSQRTSKKKEKER.

This sequence belongs to the DNA2/NAM7 helicase family. As to quaternary structure, homooligomer. Interacts with RUVBL1. Interacts with RUVBL2. Interacts with GTF3C1. Interacts with ABT1. Interacts with ribosomes. As to expression, expressed in liver, skin, muscle, heart, brain, spleen and kidney.

The protein resides in the nucleus. It is found in the cytoplasm. It localises to the cell projection. The protein localises to the axon. The catalysed reaction is ATP + H2O = ADP + phosphate + H(+). Its function is as follows. 5' to 3' helicase that unwinds RNA and DNA duplexes in an ATP-dependent reaction. Specific to 5'-phosphorylated single-stranded guanine-rich sequences. May play a role in RNA metabolism, ribosome biogenesis or initiation of translation. May play a role in regulation of transcription. Interacts with tRNA-Tyr. The sequence is that of DNA-binding protein SMUBP-2 (Ighmbp2) from Rattus norvegicus (Rat).